The primary structure comprises 894 residues: Protein SEY1 homolog (894 aa).

Low complexity-rich tracts occupy residues 1–10 (MSEEITTNQT) and 36–48 (VQEQQEQQQQEQQ). The disordered stretch occupies residues 1 to 97 (MSEEITTNQT…QKQQTQEQEH (97 aa)). Over 1–800 (MSEEITTNQT…EQNRLTSGGG (800 aa)) the chain is Cytoplasmic. Positions 21–60 (RLSNENIKQEDEEQQVQEQQEQQQQEQQEQIDDQDTQQQE) form a coiled coil. The segment covering 49–65 (EQIDDQDTQQQEDEFVV) has biased composition (acidic residues). Positions 78–93 (TPTLQETPQQQKQQTQ) are enriched in low complexity. The 224-residue stretch at 138 to 361 (GFDYSVISIL…ADSFIPKRKY (224 aa)) folds into the GB1/RHD3-type G domain. A GTP-binding site is contributed by 148–155 (GPQSSGKS). Residues 801-821 (VPGYMIILLCVLGFNEFISII) traverse the membrane as a helical segment. The Lumenal segment spans residues 822 to 824 (SSP). The chain crosses the membrane as a helical span at residues 825-845 (LLLLLTILLGGVGFVLFKLGL). Residues 846-894 (AGPFIDYSSQILVHFISKVKDIVLHVEQLQEQNHNNNNNNNNTPKQKRE) lie on the Cytoplasmic side of the membrane.

Belongs to the TRAFAC class dynamin-like GTPase superfamily. GB1/RHD3 GTPase family. RHD3 subfamily.

It is found in the endoplasmic reticulum membrane. Functionally, probable GTP-binding protein that may be involved in cell development. The sequence is that of Protein SEY1 homolog from Dictyostelium discoideum (Social amoeba).